Reading from the N-terminus, the 285-residue chain is MAVVTMKQMLDSGTHFGHQTRRWNPKMKRFILTDRNGIYIIDLQQTLTYIDKAYEFVKETVAHGGTVLFVGTKKQAQESIASEATRVGMPYVNQRWLGGMLTNFTTVHKRLLRLKELEAMEQTGGFEGRTKKEILMLTREMTKLDRTLGGIRDMAKVPSAVWIVDTNKEHLAVAEARKLNIPVIAILDTNCDPDLVDYPIPGNDDAIRSAALLTKVVASAVAEGVQARAGLSADKDAKPEAGAGEPLAEWEQELLSQAAPAAEAEAAPAAEAEAAPAAEAPATEA.

The disordered stretch occupies residues R228–A285. The span at A258–A285 shows a compositional bias: low complexity.

Belongs to the universal ribosomal protein uS2 family.

This Rhodococcus erythropolis (strain PR4 / NBRC 100887) protein is Small ribosomal subunit protein uS2.